A 425-amino-acid chain; its full sequence is Serine--tRNA ligase (425 aa).

233 to 235 provides a ligand contact to L-serine; the sequence is TAE. An ATP-binding site is contributed by 264 to 266; sequence RRE. Glu287 contacts L-serine. 351 to 354 provides a ligand contact to ATP; it reads EVSS. An L-serine-binding site is contributed by Ser386.

This sequence belongs to the class-II aminoacyl-tRNA synthetase family. Type-1 seryl-tRNA synthetase subfamily. As to quaternary structure, homodimer. The tRNA molecule binds across the dimer.

It localises to the cytoplasm. The catalysed reaction is tRNA(Ser) + L-serine + ATP = L-seryl-tRNA(Ser) + AMP + diphosphate + H(+). It carries out the reaction tRNA(Sec) + L-serine + ATP = L-seryl-tRNA(Sec) + AMP + diphosphate + H(+). It functions in the pathway aminoacyl-tRNA biosynthesis; selenocysteinyl-tRNA(Sec) biosynthesis; L-seryl-tRNA(Sec) from L-serine and tRNA(Sec): step 1/1. In terms of biological role, catalyzes the attachment of serine to tRNA(Ser). Is also able to aminoacylate tRNA(Sec) with serine, to form the misacylated tRNA L-seryl-tRNA(Sec), which will be further converted into selenocysteinyl-tRNA(Sec). This is Serine--tRNA ligase from Thermosipho melanesiensis (strain DSM 12029 / CIP 104789 / BI429).